Here is a 319-residue protein sequence, read N- to C-terminus: MPDAAAAAAAAQDADAVMRDAPADAAAGGGDNNDDDGDDGTEEDEEEDDDEEGDEEELPPAEDPAAPEPVSALLPGSPNQLTLLFQGEVYVFESVTPEKVQAVLLLLGSCEMPPGLANMVLPNQRENRGYDDLLQRTDIPAKRVASLIRFREKRKERNFDKKIRYAVRKEVALRMQRRKGQFAGRANMEGESLSPGCELASQGSGQDFLSRESKCQNCGTSEKMTPAMRRGPAGPRTLCNACGLMWANKGTLRNCPKAKVESSVVATEQSNAAVSPSGIDNKELVVPNPENITASHGEVMGDSTPANEAEIGAPKAQSQ.

The span at 1–15 (MPDAAAAAAAAQDAD) shows a compositional bias: low complexity. The interval 1–74 (MPDAAAAAAA…AAPEPVSALL (74 aa)) is disordered. Residues 32 to 60 (NNDDDGDDGTEEDEEEDDDEEGDEEELPP) are compositionally biased toward acidic residues. The region spanning 74 to 109 (LPGSPNQLTLLFQGEVYVFESVTPEKVQAVLLLLGS) is the Tify domain. The CCT domain occupies 143–185 (RVASLIRFREKRKERNFDKKIRYAVRKEVALRMQRRKGQFAGR). A GATA-type zinc finger spans residues 215-242 (CQNCGTSEKMTPAMRRGPAGPRTLCNAC). Residues 292 to 319 (ITASHGEVMGDSTPANEAEIGAPKAQSQ) form a disordered region.

The protein belongs to the type IV zinc-finger family. Class C subfamily.

Its subcellular location is the nucleus. Its function is as follows. Transcriptional activator that specifically binds 5'-GATA-3' or 5'-GAT-3' motifs within gene promoters. This Oryza sativa subsp. indica (Rice) protein is GATA transcription factor 18.